A 203-amino-acid chain; its full sequence is DNA-directed RNA polymerase subunit gamma (203 aa).

Zn(2+)-binding residues include cysteine 34, cysteine 36, cysteine 49, and cysteine 52.

It belongs to the RNA polymerase beta' chain family. RpoC1 subfamily. In cyanobacteria the RNAP catalytic core is composed of 2 alpha, 1 beta, 1 beta', 1 gamma and 1 omega subunit. When a sigma factor is associated with the core the holoenzyme is formed, which can initiate transcription. Requires Zn(2+) as cofactor.

It carries out the reaction RNA(n) + a ribonucleoside 5'-triphosphate = RNA(n+1) + diphosphate. DNA-dependent RNA polymerase catalyzes the transcription of DNA into RNA using the four ribonucleoside triphosphates as substrates. This Fischerella muscicola protein is DNA-directed RNA polymerase subunit gamma (rpoC1).